Consider the following 635-residue polypeptide: Threonine--tRNA ligase (635 aa).

Residues 1–61 form the TGS domain; it reads MIKITLKDGK…HKDSSLEILT (61 aa). The interval 242-532 is catalytic; the sequence is DHRKLGKELD…LIEQYAGAFP (291 aa). Zn(2+)-binding residues include C333, H384, and H509.

It belongs to the class-II aminoacyl-tRNA synthetase family. As to quaternary structure, homodimer. The cofactor is Zn(2+).

The protein resides in the cytoplasm. It carries out the reaction tRNA(Thr) + L-threonine + ATP = L-threonyl-tRNA(Thr) + AMP + diphosphate + H(+). Functionally, catalyzes the attachment of threonine to tRNA(Thr) in a two-step reaction: L-threonine is first activated by ATP to form Thr-AMP and then transferred to the acceptor end of tRNA(Thr). Also edits incorrectly charged L-seryl-tRNA(Thr). The polypeptide is Threonine--tRNA ligase (Clostridium botulinum (strain Kyoto / Type A2)).